The sequence spans 390 residues: Transforming growth factor beta-1 proprotein (390 aa).

The N-terminal stretch at 1-29 is a signal peptide; sequence MPPSGLRLLPLLLPLLWLLVLTPSRPAAG. The segment at 30-74 is straightjacket domain; it reads LSTCKTIDMELVKRKRIETIRGQILSKLRLASPPSQGEVPPGPLP. An arm domain region spans residues 75-271; it reads EAVLALYNST…ATPLERAQHL (197 aa). N-linked (GlcNAc...) asparagine glycans are attached at residues Asn82, Asn136, and Asn176. The segment at 226–252 is bowtie tail; sequence DSKDNTLQVDINGFTTGRRGDLATIHG. The Cell attachment site signature appears at 244-246; it reads RGD. Cystine bridges form between Cys285–Cys294, Cys293–Cys356, Cys322–Cys387, and Cys326–Cys389.

It belongs to the TGF-beta family. As to quaternary structure, homodimer; disulfide-linked. Interacts with the serine proteases, HTRA1 and HTRA3: the interaction with either inhibits TGFB1-mediated signaling and the HTRA protease activity is required for this inhibition. May interact with THSD4; this interaction may lead to sequestration by FBN1 microfibril assembly and attenuation of TGFB signaling. Interacts with CD109, DPT and ASPN. Interacts with EFEMP2. Interacts with TSKU; the interaction contributes to regulation of the hair cycle. Interacts with TGFBR3. In terms of assembly, homodimer; disulfide-linked. Interacts with transforming growth factor beta-1 (TGF-beta-1) chain; interaction is non-covalent and maintains TGF-beta-1 in a latent state; each latency-associated peptide (LAP) monomer interacts with TGF-beta-1 in the other monomer. Interacts with LTBP1; leading to regulation of TGF-beta-1 activation. Interacts with LRRC32/GARP; leading to regulation of TGF-beta-1 activation on the surface of activated regulatory T-cells (Tregs). Interacts with LRRC33/NRROS; leading to regulation of TGF-beta-1 activation in macrophages and microglia. Interacts (via cell attachment site) with integrins ITGAV and ITGB6 (ITGAV:ITGB6), leading to release of the active TGF-beta-1. Interacts with NREP; the interaction results in a decrease in TGFB1 autoinduction. Interacts with HSP90AB1; inhibits latent TGFB1 activation. Homodimer; disulfide-linked. Interacts with TGF-beta receptors (TGFBR1 and TGFBR2), leading to signal transduction. Post-translationally, transforming growth factor beta-1 proprotein: The precursor proprotein is cleaved in the Golgi apparatus by FURIN to form Transforming growth factor beta-1 (TGF-beta-1) and Latency-associated peptide (LAP) chains, which remain non-covalently linked, rendering TGF-beta-1 inactive. N-glycosylated. Deglycosylation leads to activation of Transforming growth factor beta-1 (TGF-beta-1); mechanisms triggering deglycosylation-driven activation of TGF-beta-1 are however unclear.

Its subcellular location is the secreted. The protein resides in the extracellular space. It is found in the extracellular matrix. Transforming growth factor beta-1 proprotein: Precursor of the Latency-associated peptide (LAP) and Transforming growth factor beta-1 (TGF-beta-1) chains, which constitute the regulatory and active subunit of TGF-beta-1, respectively. In terms of biological role, required to maintain the Transforming growth factor beta-1 (TGF-beta-1) chain in a latent state during storage in extracellular matrix. Associates non-covalently with TGF-beta-1 and regulates its activation via interaction with 'milieu molecules', such as LTBP1, LRRC32/GARP and LRRC33/NRROS, that control activation of TGF-beta-1. Interaction with LRRC33/NRROS regulates activation of TGF-beta-1 in macrophages and microglia. Interaction with LRRC32/GARP controls activation of TGF-beta-1 on the surface of activated regulatory T-cells (Tregs). Interaction with integrins (ITGAV:ITGB6 or ITGAV:ITGB8) results in distortion of the Latency-associated peptide chain and subsequent release of the active TGF-beta-1. Functionally, multifunctional protein that regulates the growth and differentiation of various cell types and is involved in various processes, such as normal development, immune function, microglia function and responses to neurodegeneration. Activation into mature form follows different steps: following cleavage of the proprotein in the Golgi apparatus, Latency-associated peptide (LAP) and Transforming growth factor beta-1 (TGF-beta-1) chains remain non-covalently linked rendering TGF-beta-1 inactive during storage in extracellular matrix. At the same time, LAP chain interacts with 'milieu molecules', such as LTBP1, LRRC32/GARP and LRRC33/NRROS that control activation of TGF-beta-1 and maintain it in a latent state during storage in extracellular milieus. TGF-beta-1 is released from LAP by integrins (ITGAV:ITGB6 or ITGAV:ITGB8): integrin-binding to LAP stabilizes an alternative conformation of the LAP bowtie tail and results in distortion of the LAP chain and subsequent release of the active TGF-beta-1. Once activated following release of LAP, TGF-beta-1 acts by binding to TGF-beta receptors (TGFBR1 and TGFBR2), which transduce signal. While expressed by many cells types, TGF-beta-1 only has a very localized range of action within cell environment thanks to fine regulation of its activation by Latency-associated peptide chain (LAP) and 'milieu molecules'. Plays an important role in bone remodeling: acts as a potent stimulator of osteoblastic bone formation, causing chemotaxis, proliferation and differentiation in committed osteoblasts. Can promote either T-helper 17 cells (Th17) or regulatory T-cells (Treg) lineage differentiation in a concentration-dependent manner. At high concentrations, leads to FOXP3-mediated suppression of RORC and down-regulation of IL-17 expression, favoring Treg cell development. At low concentrations in concert with IL-6 and IL-21, leads to expression of the IL-17 and IL-23 receptors, favoring differentiation to Th17 cells. Stimulates sustained production of collagen through the activation of CREB3L1 by regulated intramembrane proteolysis (RIP). Mediates SMAD2/3 activation by inducing its phosphorylation and subsequent translocation to the nucleus. Positively regulates odontoblastic differentiation in dental papilla cells, via promotion of IPO7-mediated translocation of phosphorylated SMAD2 to the nucleus and subsequent transcription of target genes. Can induce epithelial-to-mesenchymal transition (EMT) and cell migration in various cell types. The chain is Transforming growth factor beta-1 proprotein (TGFB1) from Chlorocebus aethiops (Green monkey).